The primary structure comprises 451 residues: Phosphoglucosamine mutase (451 aa).

Catalysis depends on S107, which acts as the Phosphoserine intermediate. Mg(2+) is bound by residues S107, D246, D248, and D250. S107 bears the Phosphoserine mark.

Belongs to the phosphohexose mutase family. Requires Mg(2+) as cofactor. Activated by phosphorylation.

The enzyme catalyses alpha-D-glucosamine 1-phosphate = D-glucosamine 6-phosphate. In terms of biological role, catalyzes the conversion of glucosamine-6-phosphate to glucosamine-1-phosphate. This is Phosphoglucosamine mutase from Burkholderia lata (strain ATCC 17760 / DSM 23089 / LMG 22485 / NCIMB 9086 / R18194 / 383).